Reading from the N-terminus, the 571-residue chain is Glutamate--tRNA ligase (571 aa).

Positions 110–120 match the 'HIGH' region motif; that stretch reads PNPNGPGTLGS.

This sequence belongs to the class-I aminoacyl-tRNA synthetase family. Glutamate--tRNA ligase type 2 subfamily.

The protein localises to the cytoplasm. It carries out the reaction tRNA(Glu) + L-glutamate + ATP = L-glutamyl-tRNA(Glu) + AMP + diphosphate. Functionally, catalyzes the attachment of glutamate to tRNA(Glu) in a two-step reaction: glutamate is first activated by ATP to form Glu-AMP and then transferred to the acceptor end of tRNA(Glu). This is Glutamate--tRNA ligase from Methanosarcina acetivorans (strain ATCC 35395 / DSM 2834 / JCM 12185 / C2A).